A 286-amino-acid polypeptide reads, in one-letter code: 33 kDa chaperonin (286 aa).

2 disulfide bridges follow: Cys-225-Cys-227 and Cys-258-Cys-261.

Belongs to the HSP33 family. In terms of processing, under oxidizing conditions two disulfide bonds are formed involving the reactive cysteines. Under reducing conditions zinc is bound to the reactive cysteines and the protein is inactive.

It is found in the cytoplasm. Redox regulated molecular chaperone. Protects both thermally unfolding and oxidatively damaged proteins from irreversible aggregation. Plays an important role in the bacterial defense system toward oxidative stress. In Shewanella sp. (strain MR-4), this protein is 33 kDa chaperonin.